A 166-amino-acid polypeptide reads, in one-letter code: Bacterial microcompartment shell protein EutK (166 aa).

One can recognise a BMC domain in the interval 4 to 88; that stretch reads ALGLLEVDGM…PDDDTQWLVT (85 aa). Residues 109–165 form the EutK-Ctail domain; sequence ESADELLALLTSVRQGMTAGEVAAHFGWPLEKARNALEQLFSAGTLRKRSSRYRLKP.

Belongs to the bacterial microcompartments protein family. In terms of assembly, monomeric in solution.

Its subcellular location is the bacterial microcompartment. Its pathway is amine and polyamine degradation; ethanolamine degradation. Functionally, probably a minor component of the bacterial microcompartment (BMC) shell dedicated to ethanolamine degradation. It might bind nucleic acids. The chain is Bacterial microcompartment shell protein EutK (eutK) from Escherichia coli (strain K12).